The following is a 91-amino-acid chain: Large ribosomal subunit protein eL31 (91 aa).

Belongs to the eukaryotic ribosomal protein eL31 family.

In Pyrobaculum calidifontis (strain DSM 21063 / JCM 11548 / VA1), this protein is Large ribosomal subunit protein eL31.